Consider the following 199-residue polypeptide: MGGTFDPIHNGHLVAGSEVADLFDLDVVIYVPTGQPWQKKHKKVSAAEDRYLMTVVATASNPRFLVSRVDIDRGGDTYTVDTLADIRAEYPEAELFFITGADALQKIVTWRDWEKIFDLAHFVGVTRPGYELPKDDEGSDDPLSKEVAAGRLSLVEIPAMAISSTDVRERATSGRPVWYLVPDGVVQYIAKHGMYVSSE.

This sequence belongs to the NadD family.

It catalyses the reaction nicotinate beta-D-ribonucleotide + ATP + H(+) = deamido-NAD(+) + diphosphate. It functions in the pathway cofactor biosynthesis; NAD(+) biosynthesis; deamido-NAD(+) from nicotinate D-ribonucleotide: step 1/1. Catalyzes the reversible adenylation of nicotinate mononucleotide (NaMN) to nicotinic acid adenine dinucleotide (NaAD). The protein is Probable nicotinate-nucleotide adenylyltransferase of Corynebacterium jeikeium (strain K411).